Consider the following 451-residue polypeptide: AAA-ATPase At3g28570, mitochondrial (451 aa).

The transit peptide at 1-48 directs the protein to the mitochondrion; that stretch reads MFAENLTRIGSNVAGLFFVWSTLKRYFPRQIQQLLFNAIQRIPIFKRL. 243-250 contacts ATP; it reads GPPGTGKS.

It belongs to the AAA ATPase family. BCS1 subfamily. The cofactor is Mg(2+).

The protein resides in the mitochondrion. It carries out the reaction ATP + H2O = ADP + phosphate + H(+). This chain is AAA-ATPase At3g28570, mitochondrial, found in Arabidopsis thaliana (Mouse-ear cress).